Consider the following 1755-residue polypeptide: Transposon Ty1-DR6 Gag-Pol polyprotein (1755 aa).

Composition is skewed to polar residues over residues 1–23 (MESQ…SVTS), 48–60 (TKAN…TPAS), and 127–152 (QSQF…GNTF). Disordered stretches follow at residues 1 to 93 (MESQ…MMTQ), 126 to 174 (PQSQ…PPPM), and 352 to 421 (GSRN…SKST). The span at 153–165 (TDSSSADSDMTST) shows a compositional bias: low complexity. Residues 299–401 (NNGIHINNKV…NSKSKTARAH (103 aa)) form an RNA-binding region. Low complexity predominate over residues 402 to 418 (NVSTSNNSPSTDNDSIS). Ser416 is modified (phosphoserine). The active-site For protease activity; shared with dimeric partner is Asp461. An integrase-type zinc finger-like region spans residues 583 to 640 (NVHTSESTRKYPYPFIHRMLAHANAQTIRYSLKNNTITYFNESDVDWSSAIDYQCPDC). An Integrase catalytic domain is found at 660–835 (NSYEPFQYLH…AGLDISTLLP (176 aa)). Asp671 and Asp736 together coordinate Mg(2+). 3 disordered regions span residues 956 to 1087 (SKAV…ETEK), 1092 to 1111 (RSPS…NIVP), and 1130 to 1187 (DLPL…DNET). Positions 960–969 (SPTDSTPPST) are enriched in low complexity. The span at 1005 to 1015 (STPQISNIEST) shows a compositional bias: polar residues. Basic and acidic residues predominate over residues 1038–1053 (ESSHASKSKDFRHSDS). 2 stretches are compositionally biased toward polar residues: residues 1054 to 1082 (YSEN…QISD) and 1101 to 1111 (PENNSSHNIVP). The Bipartite nuclear localization signal motif lies at 1178-1212 (KKRSLEDNETEIKVSRDTWNTKNMRSLEPPRSKKR). Positions 1338 to 1476 (NNYYITQLDI…DILGLEIKYQ (139 aa)) constitute a Reverse transcriptase Ty1/copia-type domain. 6 residues coordinate Mg(2+): Asp1346, Asp1427, Asp1428, Asp1610, Glu1652, and Asp1685. Positions 1610–1752 (DASYGNQPYY…IKTFKLLTNK (143 aa)) constitute an RNase H Ty1/copia-type domain.

In terms of assembly, the capsid protein forms a homotrimer, from which the VLPs are assembled. The protease is a homodimer, whose active site consists of two apposed aspartic acid residues. In terms of processing, initially, virus-like particles (VLPs) are composed of the structural unprocessed proteins Gag and Gag-Pol, and also contain the host initiator methionine tRNA (tRNA(i)-Met) which serves as a primer for minus-strand DNA synthesis, and a dimer of genomic Ty RNA. Processing of the polyproteins occurs within the particle and proceeds by an ordered pathway, called maturation. First, the protease (PR) is released by autocatalytic cleavage of the Gag-Pol polyprotein yielding capsid protein p45 and a Pol-p154 precursor protein. This cleavage is a prerequisite for subsequent processing of Pol-p154 at the remaining sites to release the mature structural and catalytic proteins. Maturation takes place prior to the RT reaction and is required to produce transposition-competent VLPs.

It localises to the cytoplasm. The protein localises to the nucleus. The enzyme catalyses DNA(n) + a 2'-deoxyribonucleoside 5'-triphosphate = DNA(n+1) + diphosphate. It carries out the reaction Endonucleolytic cleavage to 5'-phosphomonoester.. Functionally, capsid protein (CA) is the structural component of the virus-like particle (VLP), forming the shell that encapsulates the retrotransposons dimeric RNA genome. The particles are assembled from trimer-clustered units and there are holes in the capsid shells that allow for the diffusion of macromolecules. CA also has nucleocapsid-like chaperone activity, promoting primer tRNA(i)-Met annealing to the multipartite primer-binding site (PBS), dimerization of Ty1 RNA and initiation of reverse transcription. The aspartyl protease (PR) mediates the proteolytic cleavages of the Gag and Gag-Pol polyproteins after assembly of the VLP. Its function is as follows. Reverse transcriptase/ribonuclease H (RT) is a multifunctional enzyme that catalyzes the conversion of the retro-elements RNA genome into dsDNA within the VLP. The enzyme displays a DNA polymerase activity that can copy either DNA or RNA templates, and a ribonuclease H (RNase H) activity that cleaves the RNA strand of RNA-DNA heteroduplexes during plus-strand synthesis and hydrolyzes RNA primers. The conversion leads to a linear dsDNA copy of the retrotransposon that includes long terminal repeats (LTRs) at both ends. In terms of biological role, integrase (IN) targets the VLP to the nucleus, where a subparticle preintegration complex (PIC) containing at least integrase and the newly synthesized dsDNA copy of the retrotransposon must transit the nuclear membrane. Once in the nucleus, integrase performs the integration of the dsDNA into the host genome. The chain is Transposon Ty1-DR6 Gag-Pol polyprotein (TY1B-DR6) from Saccharomyces cerevisiae (strain ATCC 204508 / S288c) (Baker's yeast).